Here is an 86-residue protein sequence, read N- to C-terminus: Small ribosomal subunit protein uS17 (86 aa).

The protein belongs to the universal ribosomal protein uS17 family. As to quaternary structure, part of the 30S ribosomal subunit.

Functionally, one of the primary rRNA binding proteins, it binds specifically to the 5'-end of 16S ribosomal RNA. The polypeptide is Small ribosomal subunit protein uS17 (Halorhodospira halophila (strain DSM 244 / SL1) (Ectothiorhodospira halophila (strain DSM 244 / SL1))).